Here is a 347-residue protein sequence, read N- to C-terminus: Ornithine transcarbamylase, mitochondrial (347 aa).

The transit peptide at 1–25 (MINSISNTVLLKSVVSKRFFSSSAK) directs the protein to the mitochondrion. Carbamoyl phosphate-binding positions include 84-87 (STRT), arginine 135, histidine 162, and glutamine 165. Residues asparagine 194, aspartate 258, serine 262, and methionine 263 each coordinate L-ornithine. The Proton acceptor role is filled by cysteine 300. Residues 300 to 301 (CL) and arginine 328 contribute to the carbamoyl phosphate site.

Belongs to the aspartate/ornithine carbamoyltransferase superfamily. OTCase family.

It is found in the mitochondrion matrix. The catalysed reaction is carbamoyl phosphate + L-ornithine = L-citrulline + phosphate + H(+). It functions in the pathway amino-acid biosynthesis; L-arginine biosynthesis; L-arginine from L-ornithine and carbamoyl phosphate: step 1/3. The chain is Ornithine transcarbamylase, mitochondrial (OTC) from Pachysolen tannophilus (Yeast).